Consider the following 460-residue polypeptide: Argininosuccinate lyase (460 aa).

This sequence belongs to the lyase 1 family. Argininosuccinate lyase subfamily.

It is found in the cytoplasm. The catalysed reaction is 2-(N(omega)-L-arginino)succinate = fumarate + L-arginine. It participates in amino-acid biosynthesis; L-arginine biosynthesis; L-arginine from L-ornithine and carbamoyl phosphate: step 3/3. The protein is Argininosuccinate lyase of Limosilactobacillus fermentum (strain NBRC 3956 / LMG 18251) (Lactobacillus fermentum).